Consider the following 702-residue polypeptide: Rho GTPase-activating protein 22 (702 aa).

Residues 43–151 enclose the PH domain; the sequence is PVLKAGWLRK…WVQAIRRVIW (109 aa). One can recognise a Rho-GAP domain in the interval 161 to 355; it reads QRLEDTVHHE…VLIRKHGQLF (195 aa). Disordered stretches follow at residues 360 to 433, 438 to 457, 480 to 511, and 555 to 596; these read LEEP…HTLP, SFRQ…SSLE, RASS…FSST, and PSPL…TQAH. 2 positions are modified to phosphoserine: S365 and S397. 4 stretches are compositionally biased toward polar residues: residues 407 to 421, 438 to 456, 491 to 504, and 581 to 594; these read SRTS…TGPA, SFRQ…NSSL, GSAQ…NVPP, and SGSS…SPTQ. Residues 594-691 are a coiled coil; it reads QAHVRRCRAL…EEFFSTLGSL (98 aa).

In terms of assembly, interacts with VEZF1. Predominantly present in endothelial cells (at protein level).

It is found in the cytoplasm. Its subcellular location is the nucleus. Its function is as follows. Rho GTPase-activating protein involved in the signal transduction pathway that regulates endothelial cell capillary tube formation during angiogenesis. Acts as a GTPase activator for the RAC1 by converting it to an inactive GDP-bound state. Inhibits RAC1-dependent lamellipodia formation. May also play a role in transcription regulation via its interaction with VEZF1, by regulating activity of the endothelin-1 (EDN1) promoter. This chain is Rho GTPase-activating protein 22 (Arhgap22), found in Mus musculus (Mouse).